A 151-amino-acid chain; its full sequence is 3-hydroxyacyl-[acyl-carrier-protein] dehydratase FabZ (151 aa).

The active site involves His-49.

The protein belongs to the thioester dehydratase family. FabZ subfamily.

It is found in the cytoplasm. The catalysed reaction is a (3R)-hydroxyacyl-[ACP] = a (2E)-enoyl-[ACP] + H2O. In terms of biological role, involved in unsaturated fatty acids biosynthesis. Catalyzes the dehydration of short chain beta-hydroxyacyl-ACPs and long chain saturated and unsaturated beta-hydroxyacyl-ACPs. The protein is 3-hydroxyacyl-[acyl-carrier-protein] dehydratase FabZ of Bordetella parapertussis (strain 12822 / ATCC BAA-587 / NCTC 13253).